Here is a 565-residue protein sequence, read N- to C-terminus: Anaphase-promoting complex subunit 7 (565 aa).

10 TPR repeats span residues E101–T134, L169–L202, S203–N236, V237–L270, V339–R372, L373–N406, A407–P439, V442–D474, C475–D508, and Q509–E531. K229 is subject to N6-acetyllysine. The span at E513 to S523 shows a compositional bias: basic and acidic residues. The interval E513–Q565 is disordered. Over residues T528–D549 the composition is skewed to acidic residues.

The protein belongs to the APC7 family. In terms of assembly, V-shaped homodimer. The mammalian APC/C is composed at least of 14 distinct subunits ANAPC1, ANAPC2, CDC27/APC3, ANAPC4, ANAPC5, CDC16/APC6, ANAPC7, CDC23/APC8, ANAPC10, ANAPC11, CDC26/APC12, ANAPC13, ANAPC15 and ANAPC16 that assemble into a complex of at least 19 chains with a combined molecular mass of around 1.2 MDa; APC/C interacts with FZR1 and FBXO5.

It localises to the cytoplasm. The protein localises to the cytoskeleton. It is found in the nucleus. Its subcellular location is the spindle. It participates in protein modification; protein ubiquitination. Functionally, component of the anaphase promoting complex/cyclosome (APC/C), a cell cycle-regulated E3 ubiquitin ligase that controls progression through mitosis and the G1 phase of the cell cycle. The APC/C complex acts by mediating ubiquitination and subsequent degradation of target proteins: it mainly mediates the formation of 'Lys-11'-linked polyubiquitin chains and, to a lower extent, the formation of 'Lys-48'- and 'Lys-63'-linked polyubiquitin chains. The APC/C complex catalyzes assembly of branched 'Lys-11'-/'Lys-48'-linked branched ubiquitin chains on target proteins. APC7 is not required for the assembly of the APC/C complex, but has an enzyme-substrate adapter activity mediating the processive ubiquitination of specific substrates. Involved in brain development through the specific ubiquitination and clearance of MKI67 from constitutive heterochromatin after neuronal progenitors exit mitosis. This Mus musculus (Mouse) protein is Anaphase-promoting complex subunit 7 (Anapc7).